A 249-amino-acid polypeptide reads, in one-letter code: Glucosamine-6-phosphate deaminase (249 aa).

Asp67 (proton acceptor; for enolization step) is an active-site residue. Asn136 serves as the catalytic For ring-opening step. Catalysis depends on His138, which acts as the Proton acceptor; for ring-opening step. Glu143 (for ring-opening step) is an active-site residue.

The protein belongs to the glucosamine/galactosamine-6-phosphate isomerase family. NagB subfamily.

The catalysed reaction is alpha-D-glucosamine 6-phosphate + H2O = beta-D-fructose 6-phosphate + NH4(+). Its pathway is amino-sugar metabolism; N-acetylneuraminate degradation; D-fructose 6-phosphate from N-acetylneuraminate: step 5/5. In terms of biological role, catalyzes the reversible isomerization-deamination of glucosamine 6-phosphate (GlcN6P) to form fructose 6-phosphate (Fru6P) and ammonium ion. The protein is Glucosamine-6-phosphate deaminase of Clostridium botulinum (strain Alaska E43 / Type E3).